The chain runs to 342 residues: MSRIIGRKGINYIHRLNSASFTSVSASSIEKGQNRVIDASLTLIRERAKLKGELVRLLGGAKASTSLLGVPLGHNSSFLQGPAFAPPRIREAIWCGSTNSATEEGKELKDPRVLTDVGDVPVQEIRDCGVDDDRLMNVISESVKLVMEEEPLRPLVLGGDHSISYPVVRAVSEKLGGPVDILHLDAHPDIYDCFEGNKYSHASSFARIMEGGYARRLLQVGIRSINQEGREQGKRFGVEQYEMRTFSKDRPMLENLKLGEGVKGVYISIDVDCLDPAFAPGVSHIEPGGLSFRDVLNILHNLQADVVGADVVEFNPQRDTVDGMTAMVAAKLVRELAAKISK.

The transit peptide at 1-22 (MSRIIGRKGINYIHRLNSASFT) directs the protein to the mitochondrion. L-ornithine-binding positions include S77 and 96 to 99 (GSTN). Positions 161, 185, 187, and 189 each coordinate Mn(2+). 189 to 191 (DIY) contributes to the L-ornithine binding site. 195–197 (EGN) provides a ligand contact to substrate. S224 provides a ligand contact to L-ornithine. Residues D270 and D272 each coordinate Mn(2+). E313 is a substrate binding site.

Belongs to the arginase family. In terms of assembly, forms homohexamers. Mn(2+) serves as cofactor. As to expression, expressed in vasculature of roots, root tips, cotyledons, leaves, cauline leaves, stems, sepals and pollen.

The protein localises to the mitochondrion. The catalysed reaction is L-arginine + H2O = urea + L-ornithine. The enzyme catalyses agmatine + H2O = urea + putrescine. It functions in the pathway nitrogen metabolism; urea cycle; L-ornithine and urea from L-arginine: step 1/1. It participates in amine and polyamine biosynthesis; putrescine biosynthesis via agmatine pathway; putrescine from agmatine: step 1/1. Catalyzes the hydrolysis of L-arginine to urea and L-ornithine. The latter can be utilized in the urea cycle or as a precursor for the synthesis of both polyamines and proline. Possesses agmatinase activity. Catalyzes the formation of putrescine from agmatine. This chain is Arginase 1, mitochondrial, found in Arabidopsis thaliana (Mouse-ear cress).